The following is a 175-amino-acid chain: Isopentenyl-diphosphate Delta-isomerase (175 aa).

Positions 23 and 30 each coordinate Mn(2+). In terms of domain architecture, Nudix hydrolase spans 28–162; sequence TLHLAFCVFV…PLRYTPWFRR (135 aa). The active site involves cysteine 65. Residue histidine 67 coordinates Mn(2+). Glutamate 85 contacts Mg(2+). Residues glutamate 111 and glutamate 113 each contribute to the Mn(2+) site. The active site involves glutamate 113.

Belongs to the IPP isomerase type 1 family. Mg(2+) serves as cofactor. The cofactor is Mn(2+).

Its subcellular location is the cytoplasm. It carries out the reaction isopentenyl diphosphate = dimethylallyl diphosphate. It functions in the pathway isoprenoid biosynthesis; dimethylallyl diphosphate biosynthesis; dimethylallyl diphosphate from isopentenyl diphosphate: step 1/1. In terms of biological role, catalyzes the 1,3-allylic rearrangement of the homoallylic substrate isopentenyl (IPP) to its highly electrophilic allylic isomer, dimethylallyl diphosphate (DMAPP). This Halorhodospira halophila (strain DSM 244 / SL1) (Ectothiorhodospira halophila (strain DSM 244 / SL1)) protein is Isopentenyl-diphosphate Delta-isomerase.